We begin with the raw amino-acid sequence, 209 residues long: MTKGILGRKVGMTQIFTKNGILVPVTVIEATPNVVLQVKTNESDGYEAVQVGYQDMREVLSNKPAKGHAAKAKTSPKRFIREIRDVELKDYEVGSEITVDSFSEGDVVDVTGTTRGHGTQGNIKRWGQSRGPETHGSRYHRIPGSMGSIINRVPKGKKLPGHMGGKKVTVQNLVIEKVVPEKNVLLVKGNVPGAKNSLIFVKSAAKAAK.

Residues Gly112 to Asn122 are compositionally biased toward polar residues. A disordered region spans residues Gly112–Met146.

This sequence belongs to the universal ribosomal protein uL3 family. In terms of assembly, part of the 50S ribosomal subunit. Forms a cluster with proteins L14 and L19.

One of the primary rRNA binding proteins, it binds directly near the 3'-end of the 23S rRNA, where it nucleates assembly of the 50S subunit. This is Large ribosomal subunit protein uL3 from Lactobacillus gasseri (strain ATCC 33323 / DSM 20243 / BCRC 14619 / CIP 102991 / JCM 1131 / KCTC 3163 / NCIMB 11718 / NCTC 13722 / AM63).